The sequence spans 350 residues: Phosphoribosylformylglycinamidine cyclo-ligase (350 aa).

Belongs to the AIR synthase family.

It localises to the cytoplasm. The catalysed reaction is 2-formamido-N(1)-(5-O-phospho-beta-D-ribosyl)acetamidine + ATP = 5-amino-1-(5-phospho-beta-D-ribosyl)imidazole + ADP + phosphate + H(+). It participates in purine metabolism; IMP biosynthesis via de novo pathway; 5-amino-1-(5-phospho-D-ribosyl)imidazole from N(2)-formyl-N(1)-(5-phospho-D-ribosyl)glycinamide: step 2/2. In Cupriavidus pinatubonensis (strain JMP 134 / LMG 1197) (Cupriavidus necator (strain JMP 134)), this protein is Phosphoribosylformylglycinamidine cyclo-ligase.